The chain runs to 189 residues: MKLKSVLYLLMLLNCLGLKSAHAATLVHGISTSWHSFSNSVSQTWNEPQTFDLYMPALTWHNRWTYDADKIDRYNERPWGAGGGMSRYDEKGNWNGIYLMAFKDSFNKWEPIGGYGWEKTWRPLNDPDFHFGLGYTAGVTMRDNWNYIPIPLLLPLASIGYGAANFQMTYIPGTYNNGNVYFAWLRWQF.

The N-terminal stretch at 1-23 (MKLKSVLYLLMLLNCLGLKSAHA) is a signal peptide. Catalysis depends on residues His-61, Asp-104, and Ser-105.

It belongs to the lipid A palmitoyltransferase family. As to quaternary structure, homodimer.

The protein localises to the cell outer membrane. It carries out the reaction a lipid A + a 1,2-diacyl-sn-glycero-3-phosphocholine = a hepta-acyl lipid A + a 2-acyl-sn-glycero-3-phosphocholine. The catalysed reaction is a lipid IVA + a 1,2-diacyl-sn-glycero-3-phosphocholine = a lipid IVB + a 2-acyl-sn-glycero-3-phosphocholine. The enzyme catalyses a lipid IIA + a 1,2-diacyl-sn-glycero-3-phosphocholine = a lipid IIB + a 2-acyl-sn-glycero-3-phosphocholine. Functionally, transfers a fatty acid residue from the sn-1 position of a phospholipid to the N-linked hydroxyfatty acid chain on the proximal unit of lipid A or its precursors. The sequence is that of Lipid A acyltransferase PagP from Erwinia amylovora (strain ATCC 49946 / CCPPB 0273 / Ea273 / 27-3).